Here is a 683-residue protein sequence, read N- to C-terminus: Glycine--tRNA ligase beta subunit (683 aa).

The protein belongs to the class-II aminoacyl-tRNA synthetase family. In terms of assembly, tetramer of two alpha and two beta subunits.

The protein localises to the cytoplasm. It carries out the reaction tRNA(Gly) + glycine + ATP = glycyl-tRNA(Gly) + AMP + diphosphate. The polypeptide is Glycine--tRNA ligase beta subunit (Pseudomonas putida (strain GB-1)).